Consider the following 308-residue polypeptide: Ribosomal RNA small subunit methyltransferase H (308 aa).

Residues 36 to 38 (GGH), aspartate 55, phenylalanine 86, aspartate 103, and glutamine 110 each bind S-adenosyl-L-methionine.

Belongs to the methyltransferase superfamily. RsmH family.

The protein resides in the cytoplasm. The enzyme catalyses cytidine(1402) in 16S rRNA + S-adenosyl-L-methionine = N(4)-methylcytidine(1402) in 16S rRNA + S-adenosyl-L-homocysteine + H(+). Functionally, specifically methylates the N4 position of cytidine in position 1402 (C1402) of 16S rRNA. This Helicobacter pylori (strain HPAG1) protein is Ribosomal RNA small subunit methyltransferase H.